Consider the following 424-residue polypeptide: Tyrosine--tRNA ligase (424 aa).

Tyr-37 contributes to the L-tyrosine binding site. The 'HIGH' region motif lies at 42 to 51 (PTADSLHLGH). Lys-144 carries the N6-acetyllysine modification. The L-tyrosine site is built by Tyr-175 and Gln-179. Residues 235–239 (KFGKT) carry the 'KMSKS' region motif. Residue Lys-238 coordinates ATP. Positions 357 to 414 (ADLMQALVDSELQPSRGQARKTIASNAITINGEKQSDPEYFFKEEDRLFGRFTLLRRG) constitute an S4 RNA-binding domain.

This sequence belongs to the class-I aminoacyl-tRNA synthetase family. TyrS type 1 subfamily. As to quaternary structure, homodimer.

It localises to the cytoplasm. The catalysed reaction is tRNA(Tyr) + L-tyrosine + ATP = L-tyrosyl-tRNA(Tyr) + AMP + diphosphate + H(+). Catalyzes the attachment of tyrosine to tRNA(Tyr) in a two-step reaction: tyrosine is first activated by ATP to form Tyr-AMP and then transferred to the acceptor end of tRNA(Tyr). The polypeptide is Tyrosine--tRNA ligase (Escherichia coli (strain K12 / DH10B)).